A 205-amino-acid chain; its full sequence is Suppressor of IKBKE 1 (205 aa).

Coiled coils occupy residues 4-32 and 154-192; these read TIDKILQDAKTLLERLKDHDNAAESLIDQ and KAIQLDEDQAYNIQERLAQLELENKELREILSVRNESLR.

It belongs to the SIKE family. Interacts with IKBKE and TBK1 via its coiled coil region. Interaction with TBK1 is disrupted upon viral infection or TLR3 stimulation. Interacts with CDC42BPB. Associates with the STRIPAK core complex composed of PP2A catalytic and scaffolding subunits, the striatins (PP2A regulatory subunits), the striatin-associated proteins MOB4, STRIP1 and STRIP2, PDCD10 and members of the STE20 kinases, such as STK24 and STK26.

The protein resides in the cytoplasm. In terms of biological role, suppressor of IKK-epsilon. Associates with the striatin-interacting phosphatase and kinase (STRIPAK) core complex, forming the extended (SIKE1:SLMAP)STRIPAK complex. The (SIKE1:SLMAP)STRIPAK complex dephosphorylates STK3 leading to the inhibition of Hippo signaling and the control of cell growth. This is Suppressor of IKBKE 1 (sike1) from Xenopus laevis (African clawed frog).